Reading from the N-terminus, the 119-residue chain is Large ribosomal subunit protein uL18 (119 aa).

Belongs to the universal ribosomal protein uL18 family. In terms of assembly, part of the 50S ribosomal subunit; part of the 5S rRNA/L5/L18/L25 subcomplex. Contacts the 5S and 23S rRNAs.

In terms of biological role, this is one of the proteins that bind and probably mediate the attachment of the 5S RNA into the large ribosomal subunit, where it forms part of the central protuberance. This is Large ribosomal subunit protein uL18 from Sorangium cellulosum (strain So ce56) (Polyangium cellulosum (strain So ce56)).